Reading from the N-terminus, the 564-residue chain is Proline--tRNA ligase (564 aa).

This sequence belongs to the class-II aminoacyl-tRNA synthetase family. ProS type 1 subfamily. In terms of assembly, homodimer.

The protein localises to the cytoplasm. The enzyme catalyses tRNA(Pro) + L-proline + ATP = L-prolyl-tRNA(Pro) + AMP + diphosphate. Functionally, catalyzes the attachment of proline to tRNA(Pro) in a two-step reaction: proline is first activated by ATP to form Pro-AMP and then transferred to the acceptor end of tRNA(Pro). As ProRS can inadvertently accommodate and process non-cognate amino acids such as alanine and cysteine, to avoid such errors it has two additional distinct editing activities against alanine. One activity is designated as 'pretransfer' editing and involves the tRNA(Pro)-independent hydrolysis of activated Ala-AMP. The other activity is designated 'posttransfer' editing and involves deacylation of mischarged Ala-tRNA(Pro). The misacylated Cys-tRNA(Pro) is not edited by ProRS. The protein is Proline--tRNA ligase of Xylella fastidiosa (strain Temecula1 / ATCC 700964).